The primary structure comprises 299 residues: Bifunctional protein FolD (299 aa).

NADP(+)-binding positions include 168-170 (GRS), Ser-193, and Ile-234.

The protein belongs to the tetrahydrofolate dehydrogenase/cyclohydrolase family. Homodimer.

The enzyme catalyses (6R)-5,10-methylene-5,6,7,8-tetrahydrofolate + NADP(+) = (6R)-5,10-methenyltetrahydrofolate + NADPH. It carries out the reaction (6R)-5,10-methenyltetrahydrofolate + H2O = (6R)-10-formyltetrahydrofolate + H(+). Its pathway is one-carbon metabolism; tetrahydrofolate interconversion. Its function is as follows. Catalyzes the oxidation of 5,10-methylenetetrahydrofolate to 5,10-methenyltetrahydrofolate and then the hydrolysis of 5,10-methenyltetrahydrofolate to 10-formyltetrahydrofolate. This Brucella abortus (strain S19) protein is Bifunctional protein FolD.